Consider the following 494-residue polypeptide: MIHDVVREGRLSGVRSGEVAAFLSSRNADHWIAEADVLVDIAHLLMLYRQGIIEPEPAAAVMDVLLRFSADGVPEEAFDEQFEDIHAGIESLLIAEVGIEQGGRLHIGRSRNDEVATCLRLRLCEELLVIGDAVNGLCEVLVSLAGEHTHSVMPGFTHLQHAQPTTLAHHLLSYAQAFSRDLERLLSTYQRVNRSPLGAAAFASTGYPIDREFTATMLGFSGVLENSMDAVSTRDFALEALADCAILMVNASRCCEELILWSSSLVRFVQLDDAYCSTSSIMPQKKNPDTLEIMRARAGSVIGASTAALSIVKALPMSYNRDLQQLTPHLWEGIGDAGASIRILAGALSTATFNTERMETEAGRGFSTATELADMMVRECGLPFRTAHHIVGRAVRSGSLTLVSLKKAATGESIDLTALGLTEEKVQAALDPVHGIEARSVLGGPAVASVSTAIETLQESVKAGRTAIAEERYRRTTAITTLIKEARRLKTFHQ.

This sequence belongs to the lyase 1 family. Argininosuccinate lyase subfamily.

It localises to the cytoplasm. It catalyses the reaction 2-(N(omega)-L-arginino)succinate = fumarate + L-arginine. The protein operates within amino-acid biosynthesis; L-arginine biosynthesis; L-arginine from L-ornithine and carbamoyl phosphate: step 3/3. This chain is Argininosuccinate lyase, found in Methanosphaerula palustris (strain ATCC BAA-1556 / DSM 19958 / E1-9c).